A 180-amino-acid polypeptide reads, in one-letter code: Transcription factor HES-7.1-B (180 aa).

Residues 13 to 70 (HRKLLKPLVEKRRRERINNSLEKLRIFLSQTLKSEKLKNPKVEKAEILECTVQFLQSR) enclose the bHLH domain. Residues 84–116 (YQSGFQHCLETTLHFMNSKPDMNGVTKELLSHQ) form the Orange domain. The short motif at 176–179 (WRPW) is the WRPW motif element.

Transcription repression requires formation of a complex with a corepressor protein of the Groucho/TLE family. As to expression, expressed in the presumptive midbrain-hindbrain boundary (MHB) as early as the early gastrula stage (stage 10.5). Expression in the MHB continues through to tailbud stage. Also transiently expressed in the eye anlage at late neurula stage.

The protein localises to the nucleus. Functionally, transcriptional repressor. Represses transcription from both N box- and E box-containing promoters. Demarcates the prospective midbrain-hindbrain boundary (MHB) region in the neuroectoderm in early gastrulae embryos by repressing transcription of a number of target genes. In Xenopus laevis (African clawed frog), this protein is Transcription factor HES-7.1-B (hes7.1-b).